We begin with the raw amino-acid sequence, 635 residues long: Phosphatidylserine decarboxylase proenzyme 3 (635 aa).

A disordered region spans residues 1–42; sequence MGNGNSTETKESRRSKMRKKIQNFRSRRRLSRPGSGSVSGLA. Gly2 is lipidated: N-myristoyl glycine. Over residues 15–31 the composition is skewed to basic residues; that stretch reads SKMRKKIQNFRSRRRLS. Residues 22 to 147 form the C2 domain; the sequence is QNFRSRRRLS…VVQEPDSTCK (126 aa). EF-hand domains follow at residues 180 to 210 and 211 to 246; these read AKRI…FGNV and VAAN…QQEQ. The Ca(2+) site is built by Asp188, Asp190, Asp192, Lys194, Glu199, Asp224, Asn226, Asp228, and Glu235. Catalysis depends on charge relay system; for autoendoproteolytic cleavage activity residues Asp442, His498, and Ser586. The active-site Schiff-base intermediate with substrate; via pyruvic acid; for decarboxylase activity is Ser586. A Pyruvic acid (Ser); by autocatalysis modification is found at Ser586.

The protein belongs to the phosphatidylserine decarboxylase family. PSD-B subfamily. Eukaryotic type II sub-subfamily. In terms of assembly, heterodimer of a large membrane-associated beta subunit and a small pyruvoyl-containing alpha subunit. Pyruvate serves as cofactor. In terms of processing, is synthesized initially as an inactive proenzyme. Formation of the active enzyme involves a self-maturation process in which the active site pyruvoyl group is generated from an internal serine residue via an autocatalytic post-translational modification. Two non-identical subunits are generated from the proenzyme in this reaction, and the pyruvate is formed at the N-terminus of the alpha chain, which is derived from the carboxyl end of the proenzyme. The autoendoproteolytic cleavage occurs by a canonical serine protease mechanism, in which the side chain hydroxyl group of the serine supplies its oxygen atom to form the C-terminus of the beta chain, while the remainder of the serine residue undergoes an oxidative deamination to produce ammonia and the pyruvoyl prosthetic group on the alpha chain. During this reaction, the Ser that is part of the protease active site of the proenzyme becomes the pyruvoyl prosthetic group, which constitutes an essential element of the active site of the mature decarboxylase. As to expression, expressed in roots, leaves, stems and flowers.

The protein localises to the endoplasmic reticulum membrane. The enzyme catalyses a 1,2-diacyl-sn-glycero-3-phospho-L-serine + H(+) = a 1,2-diacyl-sn-glycero-3-phosphoethanolamine + CO2. The protein operates within phospholipid metabolism; phosphatidylethanolamine biosynthesis; phosphatidylethanolamine from CDP-diacylglycerol: step 2/2. Functionally, catalyzes the formation of phosphatidylethanolamine (PtdEtn) from phosphatidylserine (PtdSer). Plays a central role in phospholipid metabolism and in the interorganelle trafficking of phosphatidylserine. Contributes only to a minor proportion of PtdEtn production. In Arabidopsis thaliana (Mouse-ear cress), this protein is Phosphatidylserine decarboxylase proenzyme 3 (PSD3).